Consider the following 495-residue polypeptide: Phenylalanine--tRNA ligase alpha subunit (495 aa).

L-phenylalanine-binding positions include Thr-338, 377–379, and Tyr-417; that span reads QLE. Glu-419 serves as a coordination point for Mg(2+). Phe-442 is an L-phenylalanine binding site.

This sequence belongs to the class-II aminoacyl-tRNA synthetase family. Phe-tRNA synthetase alpha subunit type 2 subfamily. As to quaternary structure, tetramer of two alpha and two beta subunits. The cofactor is Mg(2+).

It localises to the cytoplasm. It carries out the reaction tRNA(Phe) + L-phenylalanine + ATP = L-phenylalanyl-tRNA(Phe) + AMP + diphosphate + H(+). The sequence is that of Phenylalanine--tRNA ligase alpha subunit from Methanosarcina mazei (strain ATCC BAA-159 / DSM 3647 / Goe1 / Go1 / JCM 11833 / OCM 88) (Methanosarcina frisia).